Consider the following 127-residue polypeptide: Oleate-induced peroxisomal protein POX18 (127 aa).

In terms of domain architecture, SCP2 spans 14–119 (FKELHEGLAD…KATAIESVFK (106 aa)). Positions 33–41 (AVNAVIVIT) are hydrophobic. Residues 43–52 (KNKEGKEQSW) are hydrophilic.

Monomer.

It is found in the peroxisome. Its pathway is lipid metabolism; fatty acid metabolism. Its function is as follows. Is involved in beta-oxidation of long-chain fatty acids. Its exact function is unknown, but possesses a nonspecific lipid-transfer activity, despite the absence of a cysteine residue thought to be essential for the activity of its mammalian counterparts. The protein is Oleate-induced peroxisomal protein POX18 (POX18) of Candida maltosa (Yeast).